The chain runs to 77 residues: Putative defensin-like protein 158 (77 aa).

The first 24 residues, 1-24, serve as a signal peptide directing secretion; that stretch reads MANISWSHFLILMLVFSVVKKGKG. 4 cysteine pairs are disulfide-bonded: cysteine 31-cysteine 77, cysteine 41-cysteine 60, cysteine 46-cysteine 71, and cysteine 50-cysteine 73.

Belongs to the DEFL family.

The protein resides in the secreted. The protein is Putative defensin-like protein 158 (LCR23) of Arabidopsis thaliana (Mouse-ear cress).